The chain runs to 425 residues: Glucose-1-phosphate adenylyltransferase (425 aa).

Alpha-D-glucose 1-phosphate is bound by residues Y110, G175, 190 to 191 (EK), and S208.

It belongs to the bacterial/plant glucose-1-phosphate adenylyltransferase family. As to quaternary structure, homotetramer.

It catalyses the reaction alpha-D-glucose 1-phosphate + ATP + H(+) = ADP-alpha-D-glucose + diphosphate. The protein operates within glycan biosynthesis; glycogen biosynthesis. Functionally, involved in the biosynthesis of ADP-glucose, a building block required for the elongation reactions to produce glycogen. Catalyzes the reaction between ATP and alpha-D-glucose 1-phosphate (G1P) to produce pyrophosphate and ADP-Glc. This Nitrosospira multiformis (strain ATCC 25196 / NCIMB 11849 / C 71) protein is Glucose-1-phosphate adenylyltransferase.